A 238-amino-acid polypeptide reads, in one-letter code: Ribosomal RNA small subunit methyltransferase G (238 aa).

S-adenosyl-L-methionine-binding positions include glycine 77, phenylalanine 82, 128-129 (AE), and arginine 147. The segment at 219–238 (RQTPKKYPRKAGLPNKEPIE) is disordered.

Belongs to the methyltransferase superfamily. RNA methyltransferase RsmG family.

The protein localises to the cytoplasm. Specifically methylates the N7 position of guanine in position 535 of 16S rRNA. The sequence is that of Ribosomal RNA small subunit methyltransferase G from Oceanobacillus iheyensis (strain DSM 14371 / CIP 107618 / JCM 11309 / KCTC 3954 / HTE831).